A 301-amino-acid polypeptide reads, in one-letter code: Probable alpha-L-glutamate ligase (301 aa).

Positions Leu-104–Glu-287 constitute an ATP-grasp domain. ATP contacts are provided by residues Lys-141, Glu-178 to Tyr-179, Asp-187, and Arg-211 to Asn-213. Mg(2+)-binding residues include Asp-248, Glu-260, and Asn-262. Residues Asp-248, Glu-260, and Asn-262 each contribute to the Mn(2+) site.

It belongs to the RimK family. Requires Mg(2+) as cofactor. The cofactor is Mn(2+).

The protein is Probable alpha-L-glutamate ligase of Pseudomonas fluorescens (strain Pf0-1).